Reading from the N-terminus, the 816-residue chain is uncharacterized protein (816 aa).

Disordered regions lie at residues 1 to 81 and 391 to 411; these read MDVV…NSNN and LGSN…NNDF. The segment covering 28-44 has biased composition (low complexity); it reads EVPPQRPRQQNRWKPWW. Polar residues predominate over residues 64 to 81; that stretch reads QGRSSPTTDFQDSVNSNN. 2 positions are modified to phosphoserine: Ser76 and Ser79. The segment covering 391–400 has biased composition (low complexity); the sequence is LGSNSSTNEN.

This is an uncharacterized protein from Saccharomyces cerevisiae (strain ATCC 204508 / S288c) (Baker's yeast).